The chain runs to 689 residues: Pyocin-S2 (689 aa).

Zn(2+)-binding residues include His656, His681, and His685.

This sequence belongs to the colicin/pyosin nuclease family. As to quaternary structure, purified pyocin S2 makes up a complex of the two (large and small) proteins. The large protein, but not the pyocin complex, shows in vitro DNase activity.

Its function is as follows. Causes breakdown of chromosomal DNA as well as complete inhibition of lipid synthesis in sensitive cells. The protein is Pyocin-S2 (pys2) of Pseudomonas aeruginosa (strain ATCC 15692 / DSM 22644 / CIP 104116 / JCM 14847 / LMG 12228 / 1C / PRS 101 / PAO1).